The chain runs to 1827 residues: Sucrase-isomaltase, intestinal (1827 aa).

The Cytoplasmic segment spans residues 2 to 12; the sequence is ARKKFSGLEIS. Serine 7 bears the Phosphoserine; by PKA mark. Residues 13-32 traverse the membrane as a helical; Signal-anchor for type II membrane protein segment; the sequence is LIVLFVIVTIIAIALIVVLA. Over 33-1827 the chain is Lumenal; the sequence is TKTPAVDEIS…LEEPIEINWS (1795 aa). The segment at 40–61 is disordered; it reads EISDSTSTPATTRVTTNPSDSG. A compositionally biased stretch (low complexity) spans 45 to 55; it reads TSTPATTRVTT. Residues 61–110 form the P-type 1 domain; that stretch reads GKCPNVLNDPVNVRINCIPEQFPTEGICAQRGCCWRPWNDSLIPWCFFVD. Intrachain disulfides connect cysteine 63-cysteine 94, cysteine 77-cysteine 93, and cysteine 88-cysteine 106. Residue asparagine 99 is glycosylated (N-linked (GlcNAc...) asparagine). The interval 110–1007 is isomaltase; sequence DNHGYNVQDM…DLQLNTANAR (898 aa). Tyrosine 237 and tyrosine 239 each carry sulfotyrosine. Positions 264 and 388 each coordinate substrate. Residues tyrosine 391 and tyrosine 400 each carry the sulfotyrosine modification. 2 N-linked (GlcNAc...) asparagine glycosylation sites follow: asparagine 437 and asparagine 455. The active-site Nucleophile; for isomaltase activity is the aspartate 505. Cysteines 520 and 545 form a disulfide. Position 588 (arginine 588) interacts with substrate. The active-site For isomaltase activity is the aspartate 604. Cysteines 635 and 646 form a disulfide. Position 662 (histidine 662) interacts with substrate. Sulfotyrosine occurs at positions 667, 763, and 765. N-linked (GlcNAc...) asparagine glycans are attached at residues asparagine 823, asparagine 855, asparagine 904, and asparagine 926. The 47-residue stretch at 932–978 folds into the P-type 2 domain; it reads NQIFSENERFNCYPDADLATEQKCTQRGCVWRTGSSLSKAPECYFPR. The tract at residues 1008 to 1827 is sucrase; it reads IKLPSDPIST…LEEPIEINWS (820 aa). Asparagine 1235, asparagine 1303, asparagine 1340, and asparagine 1354 each carry an N-linked (GlcNAc...) asparagine glycan. Residue aspartate 1394 is the Nucleophile; for sucrase activity of the active site. Glutamate 1397 acts as the For sucrase activity in catalysis. An N-linked (GlcNAc...) asparagine glycan is attached at asparagine 1403. Catalysis depends on aspartate 1500, which acts as the Proton donor; for isomaltase activity. 6 N-linked (GlcNAc...) asparagine glycosylation sites follow: asparagine 1535, asparagine 1572, asparagine 1675, asparagine 1748, asparagine 1763, and asparagine 1815.

The protein belongs to the glycosyl hydrolase 31 family. In terms of assembly, the resulting sucrase and isomaltase subunits stay associated with one another in a complex by non-covalent linkages. In terms of processing, the precursor is proteolytically cleaved when exposed to pancreatic proteases in the intestinal lumen. Post-translationally, sulfated. Expressed in the poorly differentiated crypt cells of the small intestine as well as in the mature villous cells. Expressed at very low levels in the colon.

Its subcellular location is the apical cell membrane. The enzyme catalyses Hydrolysis of sucrose and maltose by an alpha-D-glucosidase-type action.. It catalyses the reaction Hydrolysis of (1-&gt;6)-alpha-D-glucosidic linkages in some oligosaccharides produced from starch and glycogen by alpha-amylase, and in isomaltose.. Its function is as follows. Plays an important role in the final stage of carbohydrate digestion. Isomaltase activity is specific for both alpha-1,4- and alpha-1,6-oligosaccharides. This is Sucrase-isomaltase, intestinal (SI) from Homo sapiens (Human).